We begin with the raw amino-acid sequence, 466 residues long: MNQGKIVQIIGAIVDVEFPRNNVPKVYNALKIDGTAIILEVQQQLGDGIVRTIALGSTDGLKRNLIATDTGHAITVPVGTGTLGRIMDVLGNPIDEAGPITYTDQWEIHRNAPSYEDQASTTELLETGIKVIDLMCPFAKGGKVGLFGGAGVGKTVNMMELINNIAKAHSGLSVFAGVGERTREGNDFYHEMKDSNVLDKVAMVYGQMNEPPGNRLRVALTGLTMAEYFRDEKDSSGKGKDVLLFIDNIYRYTLAGTEVSALLGRMPSAVGYQPTLAEEMGVLQERITSTANGSITSIQAVYVPADDLTDPSPATTFGHLDSTVTLSRSIAALGIYPAVDPLDSSSRQMDPLIIGEEHYNTTQRVQQTLQKYKDLKDIIAILGMDELSEDDKLAVSRARKIERFFSQPFHVAEVFTGAPGKYVPLKETIRGFKAIVDGEYDHLPEQAFYMVGNIEEVIEKANKMTA.

G148–T155 lines the ATP pocket.

This sequence belongs to the ATPase alpha/beta chains family. F-type ATPases have 2 components, CF(1) - the catalytic core - and CF(0) - the membrane proton channel. CF(1) has five subunits: alpha(3), beta(3), gamma(1), delta(1), epsilon(1). CF(0) has three main subunits: a(1), b(2) and c(9-12). The alpha and beta chains form an alternating ring which encloses part of the gamma chain. CF(1) is attached to CF(0) by a central stalk formed by the gamma and epsilon chains, while a peripheral stalk is formed by the delta and b chains.

The protein localises to the cell inner membrane. The enzyme catalyses ATP + H2O + 4 H(+)(in) = ADP + phosphate + 5 H(+)(out). Produces ATP from ADP in the presence of a proton gradient across the membrane. The catalytic sites are hosted primarily by the beta subunits. This is ATP synthase subunit beta from Xylella fastidiosa (strain 9a5c).